A 409-amino-acid chain; its full sequence is Lactadherin (409 aa).

2 consecutive EGF-like domains span residues 2–41 (SGDF…LICN) and 44–88 (EKGP…IHCE). 3 cysteine pairs are disulfide-bonded: C6–C17, C11–C29, and C31–C40. Residue N41 is glycosylated (N-linked (GlcNAc...) asparagine). 6 disulfide bridges follow: C48–C59, C53–C76, C78–C87, C91–C247, C234–C238, and C252–C409. The Cell attachment site signature appears at 67-69 (RGD). 2 consecutive F5/8 type C domains span residues 91–247 (CNAP…LLGC) and 252–409 (CAEP…LLGC). A glycan (N-linked (GlcNAc...) asparagine) is linked at N372.

In terms of tissue distribution, mammary epithelial cell surfaces and spermatozoan. Also present in testis, epididymis, uterus, adrenal gland, tonsil, muscle, heart, lymphatic gland, thymus and kidney but not spleen, liver, lung or brain.

It localises to the membrane. The protein localises to the secreted. Its subcellular location is the cytoplasmic vesicle. It is found in the secretory vesicle. The protein resides in the acrosome membrane. Contributes to phagocytic removal of apoptotic cells in many tissues. Plays an important role in the maintenance of intestinal epithelial homeostasis and the promotion of mucosal healing. Promotes VEGF-dependent neovascularization. Specific ligand for the alpha-v/beta-3 and alpha-v/beta-5 receptors. Also binds to phosphatidylserine-enriched cell surfaces in a receptor-independent manner. Zona pellucida-binding protein which may play a role in gamete interaction. This Sus scrofa (Pig) protein is Lactadherin (MFGE8).